The following is a 153-amino-acid chain: MERATFAAGCFWGVEAAFSKVEGVISTKVGYTGGTLKDPTYKDVSTGSTGHAESIDIIFDESVITYGELLEVLWNTHDPTTKDSQGPDHGSQYRSAIFYHDDAQREAALRSREQLERSGKYDSTIKTEIVKASEFSPAEDYHQKYFQKLQFKR.

Cys-10 is a catalytic residue.

Belongs to the MsrA Met sulfoxide reductase family.

The catalysed reaction is L-methionyl-[protein] + [thioredoxin]-disulfide + H2O = L-methionyl-(S)-S-oxide-[protein] + [thioredoxin]-dithiol. The enzyme catalyses [thioredoxin]-disulfide + L-methionine + H2O = L-methionine (S)-S-oxide + [thioredoxin]-dithiol. Has an important function as a repair enzyme for proteins that have been inactivated by oxidation. Catalyzes the reversible oxidation-reduction of methionine sulfoxide in proteins to methionine. The sequence is that of Peptide methionine sulfoxide reductase MsrA from Methanococcoides burtonii (strain DSM 6242 / NBRC 107633 / OCM 468 / ACE-M).